The primary structure comprises 255 residues: Propionicin-F (255 aa).

2 propeptides span residues 1–101 and 145–255; these read MNTK…RVSC and GTPT…DETV.

The protein localises to the secreted. Functionally, bacteriocin with specific antibacterial activity against strains of P.freudenreichii. No antibacterial activity was detected against P.acidipropionici, P.jensenii and P.thoenii. This chain is Propionicin-F, found in Propionibacterium freudenreichii subsp. freudenreichii.